A 1777-amino-acid polypeptide reads, in one-letter code: MDNSMMDSTLRRILFFSNEFPSDDLKDLFRRLDQHSKDRRFRLLSIFLEESTAILKDEVSKLPRPLKELVPPFNSVLSLVDVDFRQGPLGAAMESSMLTILELGLFIGHYESEDTEWDLVPGQSVLAGLSIGILAAAAVALSSSLADVAKTGAEAVRVSFRLGVYVADISTKLEAPQSDGTLSSWAHVVTEMTEASVQDELKQFNTGTHSPELTKVFVSAADKTSVSVSGPPSRIKAAFQHSPVLRYSKSLPLPVYDGLCHASHLYTRSDIDSIINSSESVILPDRSVRLALLSSQTGKPFVAKTASDLFLEIGTELLTGTIYLDNVTAGIVQHLQPQSKETSSCQIDSFRTSLVLRGIHSAVEAELSRDRQLTRRDLVSWISRDFGPRRPRSQASSKLAIVGMACRLPGGANDLDLFWKLLEEGRDTLTTVPPDRFDLNTHYDPTGKTENATQTPYGNFIDRPGFFDAGFFNMSPREAEQTDPMQRLALVTAYEALEMAGVVPGRTPSTHPSRIGTFYGQASDDWRELNASQNISTYAVPGGERSFGNGRINYFFKFSGPSFNLDTACSSGLAAVQAACSALWAGEVDTAIAGGLNVITDPDNYCGLGNAHFLSKTGQCKVWDKDADGYCRADGIGSVVIKRLEDAEADNDNILAVVLGASTNHSAEAISITHPHAGAQKANYRQVLNQAGVNPIDVSYIELHGTGTQAGDAVESESVSDIFAPVTPRRRPDQRLYLGAVKSNIGHGEAAAGIASLLKALLVYQKNLIPMHIGIKSEINPTIPKDLERRNVGLAMQNTPWPRPAGKKRLAVVNSFGAHGGNTTLLLEDAPERVKIQGTEDRITHSILLSAKSKTSLQANMESLLSYLDQHPETSLADLAYTTSSRRMHHNMRFGTLVSSISGLQKMLRSQLDNPNFASEIRPVPNEAPSVILAFTGQGAYYHGMGSELFAEFPYFRAQVQQLDRLAQRLGFPSVVPPWRRFWSLLGVSISAVIGHSLGEYAALAVAGVISAADAIYLVGRRAQLVEERCAQASHSMLSVRASEDAIQEMLAVELETASITYEVSCCNTNQDTVIGGPKGEINDIRRALEAKSIKCTILDVPYAFHTAQMNPILDDLETLAKAVPFKAPSIPVISPLLATVIYDVKSLDANYLRRATRETVDFAAAIEAAQDMGLVDSKTIWIDVGPHPICAGLVRSMIPSASAIPSCRRNEDSIATISKGLVTLYLAGLTPSWVEFFKPREREYSLLYLPKYRWNETDYWIPYIGTWTLDKAHLKHGTKPKTPFSGSMSRPSALRTSLVHQITAETVEATTATLHTISDMQHPDFLEAIHGHTMNKCGVATSSIWSDMAFTVGEYLYRRLVPNTKDVHMNLTDVEVLHAQVASKTKGSVQPLVLRAHLDLSTNSMSLAWFNADGETGECAAESFATATIRFEDPEAWRKDWARLAHLVRGRIEVLEQRATEGKASRLSKPLAYALFKNVVDYADRYRGMDSVVLDELEAMAEVTLVPERYGTWHTPPHWIDSVSHLAGLVMNGSDASNTRDYFFVTPGCDSFRLLKKLEPGARYRSYVRMFPLPEDPNMHSGDVYILQGEEIVGMVGMIRFRRVPRLLMDRFFSPPTTTSVAVPVPPLTGATMKCKDITQTAPALPTPAPPIVVSSPVVSSTMACNIPEPAPLLATSSKSSTPKESPIVTPAESERAEPVDNSMTSQCLRLMARETGLEVEALTADASFVQLGVDSLMSLVLSEKFRAELGVEIKSSLFLECPTIGEMTAWIEEYC.

Residues 27–261 (DLFRRLDQHS…PLPVYDGLCH (235 aa)) form an N-terminal acylcarrier protein transacylase domain (SAT) region. Positions 396-829 (SSKLAIVGMA…GGNTTLLLED (434 aa)) constitute a Ketosynthase family 3 (KS3) domain. Active-site for beta-ketoacyl synthase activity residues include cysteine 569, histidine 704, and histidine 747. Residues 934–1212 (AFTGQGAYYH…SAIPSCRRNE (279 aa)) are malonyl-CoA:ACP transacylase (MAT) domain. The interval 1297-1616 (TSLVHQITAE…RLLMDRFFSP (320 aa)) is product template (PT) domain. The interval 1301–1437 (HQITAETVEA…ATIRFEDPEA (137 aa)) is N-terminal hotdog fold. A PKS/mFAS DH domain is found at 1301–1611 (HQITAETVEA…FRRVPRLLMD (311 aa)). The active-site Proton acceptor; for dehydratase activity is the histidine 1333. Residues 1465-1611 (ASRLSKPLAY…FRRVPRLLMD (147 aa)) form a C-terminal hotdog fold region. Aspartate 1522 acts as the Proton donor; for dehydratase activity in catalysis. Residues 1674–1704 (LLATSSKSSTPKESPIVTPAESERAEPVDNS) form a disordered region. Residues 1677–1688 (TSSKSSTPKESP) are compositionally biased toward low complexity. The Carrier domain maps to 1700 to 1777 (PVDNSMTSQC…EMTAWIEEYC (78 aa)). The residue at position 1737 (serine 1737) is an O-(pantetheine 4'-phosphoryl)serine.

The cofactor is pantetheine 4'-phosphate.

It participates in secondary metabolite biosynthesis. Non-reducing polyketide synthase; part of the gene cluster that mediates the biosynthesis of neosartoricin B, a prenylated anthracenone that probably exhibits T-cell antiproliferative activity, suggestive of a physiological role as an immunosuppressive agent. The non-reducing polyketide synthase nscA probably synthesizes and cyclizes the decaketide backbone. The hydrolase nscB then mediates the product release through hydrolysis followed by spontaneous decarboxylation. The prenyltransferase nscD catalyzes the addition of the dimethylallyl group to the aromatic C5. The FAD-dependent monooxygenase nscC is then responsible for the stereospecific hydroxylation at C2. Neosartoricin B can be converted into two additional compounds neosartoricins C and D. Neosartoricin C is a spirocyclic compound that is cyclized through the attack of C3 hydroxyl on C14, followed by dehydration. On the other hand, neosartoricin D is a further cyclized compound in which attack of C2 on C14 in neosartoricin C results in the formation of the acetal-containing dioxabicyclo-octanone ring. Both of these compounds are novel and possibly represent related metabolites of the gene cluster. The sequence is that of Non-reducing polyketide synthase nscA from Trichophyton equinum (strain ATCC MYA-4606 / CBS 127.97) (Horse ringworm fungus).